Consider the following 675-residue polypeptide: Putative methyl-accepting chemotaxis AlkN (675 aa).

Transmembrane regions (helical) follow at residues 24-44 (IALY…FLLS) and 303-323 (FPSV…FFII). The region spanning 343–394 (QRNQAAILRLLDELGDLADGDLTVQATVTEDFTGAIADSINYSIDQLRNLVQ) is the HAMP domain. Positions 399–635 (SAVQVASAAQ…HISNTMNVIQ (237 aa)) constitute a Methyl-accepting transducer domain.

This sequence belongs to the methyl-accepting chemotaxis (MCP) protein family.

The protein localises to the membrane. The protein operates within hydrocarbon metabolism; alkane degradation. Functionally, chemotactic-signal transducers respond to changes in the concentration of attractants and repellents in the environment, transduce a signal from the outside to the inside of the cell, and facilitate sensory adaptation through the variation of the level of methylation. The chain is Putative methyl-accepting chemotaxis AlkN from Alcanivorax borkumensis (strain ATCC 700651 / DSM 11573 / NCIMB 13689 / SK2).